The sequence spans 299 residues: Lipoyl synthase 2 (299 aa).

[4Fe-4S] cluster is bound by residues C45, C50, C56, C71, C75, C78, and S295. The Radical SAM core domain maps to 57–284 (YASGTATFLL…KSFCSKLGFK (228 aa)).

Belongs to the radical SAM superfamily. Lipoyl synthase family. [4Fe-4S] cluster is required as a cofactor.

The protein resides in the cytoplasm. The enzyme catalyses [[Fe-S] cluster scaffold protein carrying a second [4Fe-4S](2+) cluster] + N(6)-octanoyl-L-lysyl-[protein] + 2 oxidized [2Fe-2S]-[ferredoxin] + 2 S-adenosyl-L-methionine + 4 H(+) = [[Fe-S] cluster scaffold protein] + N(6)-[(R)-dihydrolipoyl]-L-lysyl-[protein] + 4 Fe(3+) + 2 hydrogen sulfide + 2 5'-deoxyadenosine + 2 L-methionine + 2 reduced [2Fe-2S]-[ferredoxin]. It functions in the pathway protein modification; protein lipoylation via endogenous pathway; protein N(6)-(lipoyl)lysine from octanoyl-[acyl-carrier-protein]: step 2/2. Its function is as follows. Catalyzes the radical-mediated insertion of two sulfur atoms into the C-6 and C-8 positions of the octanoyl moiety bound to the lipoyl domains of lipoate-dependent enzymes, thereby converting the octanoylated domains into lipoylated derivatives. In Prochlorococcus marinus subsp. pastoris (strain CCMP1986 / NIES-2087 / MED4), this protein is Lipoyl synthase 2.